Reading from the N-terminus, the 70-residue chain is uncharacterized protein (70 aa).

The chain crosses the membrane as a helical span at residues 50-70 (INVVLVLIIALIIFILMLDGV).

It is found in the membrane. This is an uncharacterized protein from Dictyostelium discoideum (Social amoeba).